The chain runs to 254 residues: Wall-associated protein (254 aa).

A disordered region spans residues 25–46 (DRVEPKEEPPKVPQAPKRDLKP).

It is found in the secreted. It localises to the cell wall. The polypeptide is Wall-associated protein (wapA') (Geobacillus stearothermophilus (Bacillus stearothermophilus)).